Consider the following 128-residue polypeptide: Fluoride-specific ion channel FluC (128 aa).

A run of 4 helical transmembrane segments spans residues 7–27 (LAIG…AGLV), 37–57 (FGTL…IGAI), 73–93 (TGMM…FFLF), and 96–116 (ALYI…IILA). Residues Gly-77 and Thr-80 each coordinate Na(+).

Belongs to the fluoride channel Fluc/FEX (TC 1.A.43) family.

The protein localises to the cell inner membrane. It catalyses the reaction fluoride(in) = fluoride(out). With respect to regulation, na(+) is not transported, but it plays an essential structural role and its presence is essential for fluoride channel function. In terms of biological role, fluoride-specific ion channel. Important for reducing fluoride concentration in the cell, thus reducing its toxicity. This Nautilia profundicola (strain ATCC BAA-1463 / DSM 18972 / AmH) protein is Fluoride-specific ion channel FluC.